A 153-amino-acid chain; its full sequence is Probable inactive ribonuclease-like protein 13 (153 aa).

Positions Met1–Gly22 are cleaved as a signal peptide.

This sequence belongs to the pancreatic ribonuclease family.

The protein localises to the secreted. In terms of biological role, does not exhibit any ribonuclease activity. The polypeptide is Probable inactive ribonuclease-like protein 13 (Rnase13) (Rattus norvegicus (Rat)).